The chain runs to 70 residues: Guanine nucleotide-binding protein G(I)/G(S)/G(O) subunit gamma-8 (70 aa).

The residue at position 67 (Cys-67) is a Cysteine methyl ester. Cys-67 is lipidated: S-geranylgeranyl cysteine. A propeptide spans 68–70 (TLL) (removed in mature form).

Belongs to the G protein gamma family. In terms of assembly, g proteins are composed of 3 units, alpha, beta and gamma. As to expression, detected in the olfactory epithelium, the vomeronasal epithelium and, to a lesser extent, the olfactory bulb.

It is found in the cell membrane. Functionally, guanine nucleotide-binding proteins (G proteins) are involved as a modulator or transducer in various transmembrane signaling systems. The beta and gamma chains are required for the GTPase activity, for replacement of GDP by GTP, and for G protein-effector interaction. This subunit may have a very specific role in the development and turnover of olfactory and vomeronasal neurons. This chain is Guanine nucleotide-binding protein G(I)/G(S)/G(O) subunit gamma-8 (Gng8), found in Rattus norvegicus (Rat).